Consider the following 230-residue polypeptide: Orotidine 5'-phosphate decarboxylase (230 aa).

Substrate-binding positions include Asp-10, Lys-32, 59-68, Thr-116, Arg-177, Gln-186, Gly-206, and Arg-207; that span reads DLKFHDIPRT. Lys-61 functions as the Proton donor in the catalytic mechanism.

The protein belongs to the OMP decarboxylase family. Type 1 subfamily. As to quaternary structure, homodimer.

The catalysed reaction is orotidine 5'-phosphate + H(+) = UMP + CO2. It functions in the pathway pyrimidine metabolism; UMP biosynthesis via de novo pathway; UMP from orotate: step 2/2. Functionally, catalyzes the decarboxylation of orotidine 5'-monophosphate (OMP) to uridine 5'-monophosphate (UMP). The polypeptide is Orotidine 5'-phosphate decarboxylase (Methylacidiphilum infernorum (isolate V4) (Methylokorus infernorum (strain V4))).